The chain runs to 1902 residues: Plexin-B3 (1902 aa).

The signal sequence occupies residues 1 to 36 (MLTDFLQAPVMAPWSPFSLHLLLLFLPLLPLTRVHR). Residues 37-461 (FSVPNTSFNH…TAQQVDRILV (425 aa)) enclose the Sema domain. Topologically, residues 37–1245 (FSVPNTSFNH…MMSTFPVEAQ (1209 aa)) are extracellular. An N-linked (GlcNAc...) asparagine glycan is attached at N41. Disulfide bonds link C88–C97 and C122–C130. An N-linked (GlcNAc...) asparagine glycan is attached at N221. Cystine bridges form between C257–C360, C273–C305, and C323–C347. The disordered stretch occupies residues 353–372 (DSPESYPCGDEHTPSPIAGR). N-linked (GlcNAc...) asparagine glycosylation is found at N416 and N469. The PSI 1 domain occupies 463–515 (ACPQFPNCTTCLQARDPLCGWCILQGRCTRRGECGRAAQPNHWLWSYEDNHCP). Cystine bridges form between C464-C481, C470-C514, C473-C490, C484-C496, and C551-C569. 2 consecutive PSI domains span residues 609–671 (DCSA…EACP) and 776–822 (DCAM…QLCP). N-linked (GlcNAc...) asparagine glycosylation is found at N791, N889, N910, N946, N1090, and N1207. IPT/TIG domains follow at residues 823 to 914 (IPSI…FTYQ), 915 to 1001 (DPVL…FRYT), 1003 to 1134 (NPQL…FLYQ), and 1154 to 1221 (KPGH…QMGN). A helical membrane pass occupies residues 1246–1266 (LGLGMGAAVLIAAVLLLTLMY). Residues 1267-1902 (RHKSKKALRD…ALVEYKVTDL (636 aa)) are Cytoplasmic-facing.

Belongs to the plexin family. As to quaternary structure, binds MET and MST1R. Interacts with RIT2/RIN. May form homodimers (via Sema domain). Interacts (via cytoplasmic domain) with FSCN1, ARHGDIA and RAC1. Expressed in brain (at protein level). In cerebellum, strongest expression detected in Purkinje and granular cells. Detected at very low levels in several fetal tissues, including dorsal root ganglia (DRG), heart, lung, optic bulb, brain and liver.

It is found in the cell membrane. Its function is as follows. Receptor for SEMA5A that plays a role in axon guidance, invasive growth and cell migration. Stimulates neurite outgrowth and mediates Ca(2+)/Mg(2+)-dependent cell aggregation. In glioma cells, SEMA5A stimulation of PLXNB3 results in the disassembly of F-actin stress fibers, disruption of focal adhesions and cellular collapse as well as inhibition of cell migration and invasion through ARHGDIA-mediated inactivation of RAC1. Seem to be non-essential for normal development and function of the central nervous system. The chain is Plexin-B3 (Plxnb3) from Mus musculus (Mouse).